Consider the following 628-residue polypeptide: Netrin-4 (628 aa).

An N-terminal signal peptide occupies residues 1–18 (MGSCARLLLLWGCTVVAA). The Laminin N-terminal domain occupies 30-261 (CEKACNPRMG…AIYDFIVKGS (232 aa)). 2 N-linked (GlcNAc...) asparagine glycosylation sites follow: N56 and N163. 12 disulfide bridges follow: C262/C271, C264/C293, C295/C304, C307/C329, C332/C341, C334/C359, C362/C371, C374/C392, C395/C413, C397/C420, C422/C431, and C434/C446. Laminin EGF-like domains follow at residues 262-331 (CFCN…ECRT), 332-394 (CKCN…ACKP), and 395-448 (CSCH…GCRP). N353 is a glycosylation site (N-linked (GlcNAc...) asparagine). N483 carries an N-linked (GlcNAc...) asparagine glycan. Intrachain disulfides connect C506–C576 and C520–C627. In terms of domain architecture, NTR spans 506-627 (CECKEQTLGN…KVMDILKREC (122 aa)).

As to quaternary structure, may form a homodimer.

It localises to the secreted. The protein localises to the extracellular space. The protein resides in the extracellular matrix. Functionally, may play an important role in neural, kidney and vascular development. In Pongo abelii (Sumatran orangutan), this protein is Netrin-4 (NTN4).